The chain runs to 258 residues: MTQHSRDTPQFYLTAPSPCPYLPGRHERKVFTHLVGDRAGDLNDLLTHGGFRRSQSIAYRPACDQCRACVSVRVIANEFRPSRNFRKVIARNADIIGEQRSAVPTSEQYSVFRAYLDARHRHGGMADMTVLDYAMMVEDSHVETRIIEYRKRGPDSGITGRGEELIAVALTDVLSDGLSMVYSFFEPSQVSRSMGTFMILDHIARARRQGLPYVYLGYWIEGSKKMDYKARFLPQQRLAPSGWLRIDAQGDAASEPQD.

The protein belongs to the R-transferase family. Bpt subfamily.

It is found in the cytoplasm. It carries out the reaction N-terminal L-glutamyl-[protein] + L-leucyl-tRNA(Leu) = N-terminal L-leucyl-L-glutamyl-[protein] + tRNA(Leu) + H(+). The enzyme catalyses N-terminal L-aspartyl-[protein] + L-leucyl-tRNA(Leu) = N-terminal L-leucyl-L-aspartyl-[protein] + tRNA(Leu) + H(+). Functionally, functions in the N-end rule pathway of protein degradation where it conjugates Leu from its aminoacyl-tRNA to the N-termini of proteins containing an N-terminal aspartate or glutamate. In Bradyrhizobium diazoefficiens (strain JCM 10833 / BCRC 13528 / IAM 13628 / NBRC 14792 / USDA 110), this protein is Aspartate/glutamate leucyltransferase.